Here is a 114-residue protein sequence, read N- to C-terminus: T cell receptor beta variable 5-1 (114 aa).

The N-terminal stretch at 1-21 (MGSRLLCWVLLCLLGAGPVKA) is a signal peptide. The region spanning 22–114 (GVTQTPRYLI…SALYLCASSL (93 aa)) is the Ig-like domain. Cysteine 42 and cysteine 110 are disulfide-bonded. Asparagine 96 is a glycosylation site (N-linked (GlcNAc...) asparagine).

As to quaternary structure, alpha-beta TR is a heterodimer composed of an alpha and beta chain; disulfide-linked. The alpha-beta TR is associated with the transmembrane signaling CD3 coreceptor proteins to form the TR-CD3 (TcR or TCR). The assembly of alpha-beta TR heterodimers with CD3 occurs in the endoplasmic reticulum where a single alpha-beta TR heterodimer associates with one CD3D-CD3E heterodimer, one CD3G-CD3E heterodimer and one CD247 homodimer forming a stable octameric structure. CD3D-CD3E and CD3G-CD3E heterodimers preferentially associate with TR alpha and TR beta chains, respectively. The association of the CD247 homodimer is the last step of TcR assembly in the endoplasmic reticulum and is required for transport to the cell surface.

The protein localises to the cell membrane. V region of the variable domain of T cell receptor (TR) beta chain that participates in the antigen recognition. Alpha-beta T cell receptors are antigen specific receptors which are essential to the immune response and are present on the cell surface of T lymphocytes. Recognize peptide-major histocompatibility (MH) (pMH) complexes that are displayed by antigen presenting cells (APC), a prerequisite for efficient T cell adaptive immunity against pathogens. Binding of alpha-beta TR to pMH complex initiates TR-CD3 clustering on the cell surface and intracellular activation of LCK that phosphorylates the ITAM motifs of CD3G, CD3D, CD3E and CD247 enabling the recruitment of ZAP70. In turn ZAP70 phosphorylates LAT, which recruits numerous signaling molecules to form the LAT signalosome. The LAT signalosome propagates signal branching to three major signaling pathways, the calcium, the mitogen-activated protein kinase (MAPK) kinase and the nuclear factor NF-kappa-B (NF-kB) pathways, leading to the mobilization of transcription factors that are critical for gene expression and essential for T cell growth and differentiation. The T cell repertoire is generated in the thymus, by V-(D)-J rearrangement. This repertoire is then shaped by intrathymic selection events to generate a peripheral T cell pool of self-MH restricted, non-autoaggressive T cells. Post-thymic interaction of alpha-beta TR with the pMH complexes shapes TR structural and functional avidity. The polypeptide is T cell receptor beta variable 5-1 (Homo sapiens (Human)).